Here is a 597-residue protein sequence, read N- to C-terminus: (E)-sabinene hydrate synthase, chloroplastic (597 aa).

The N-terminal 47 residues, 1–47, are a transit peptide targeting the chloroplast; it reads MSTISINHVGILRNPLQCKNKRTSINKPWSLSLPRSSPASRLVKPCR. Mn(2+)-binding residues include aspartate 353 and aspartate 357. Positions 353–357 match the DDXXD motif motif; the sequence is DDVYD. 2 homodimerization regions span residues 359–365 and 431–468; these read YGTLDEL and EAGW…VSLP. Positions 495 and 503 each coordinate Mn(2+).

It belongs to the terpene synthase family. As to quaternary structure, homodimer. It depends on Mn(2+) as a cofactor. The cofactor is Mg(2+).

It localises to the plastid. The protein localises to the chloroplast. It carries out the reaction (2E)-geranyl diphosphate + H2O = sabinene hydrate + diphosphate. The protein operates within secondary metabolite biosynthesis; terpenoid biosynthesis. Functionally, involved in the biosynthesis of phenolic monoterpenes natural products. Monoterpene synthase which catalyzes the conversion of geranyl diphosphate (GPP) to sabinene hydrate, specifically (E)-sabinene hydrate, and the formation of minor amounts and traces of several other monoterpenes (e.g. mainly alpha-pinene, limonene and alpha-terpineol). The chain is (E)-sabinene hydrate synthase, chloroplastic from Thymus vulgaris (Thyme).